The chain runs to 884 residues: Formin-like protein 11 (884 aa).

The first 18 residues, 1 to 18, serve as a signal peptide directing secretion; that stretch reads MVYFRQIFLMIIVVSLHC. The segment at 89–143 is disordered; the sequence is AESASFSPWPAPSPSPFPNGGPIESPAYPPAPPRPIPPHLRRPLPQRTHPLEQPE. 2 stretches are compositionally biased toward pro residues: residues 97-107 and 115-126; these read WPAPSPSPFPN and AYPPAPPRPIPP. A helical transmembrane segment spans residues 158–178; the sequence is ILVPVVASTASAIGFVVCVVG. Disordered stretches follow at residues 307–384, 416–469, and 512–532; these read SSDD…FSNK, SFPI…APLP, and MQSSTKNEEGKSKTPSPGKHL. Residues 329-343 are compositionally biased toward low complexity; sequence SNASSASGSVNVGSS. Positions 346–358 are enriched in basic and acidic residues; that stretch reads FSEHKLDIPECSR. Pro residues-rich tracts occupy residues 367-379 and 425-436; these read APPPPPPPPPPLP and QPRPPPPPPPPQ. The 424-residue stretch at 461-884 folds into the FH2 domain; that stretch reads LGKDGAPLPK…NSPSPLAPFR (424 aa).

The protein belongs to the formin-like family. Class-I subfamily.

It localises to the membrane. Might be involved in the organization and polarity of the actin cytoskeleton. The sequence is that of Formin-like protein 11 (FH11) from Arabidopsis thaliana (Mouse-ear cress).